Reading from the N-terminus, the 412-residue chain is Probable inactive allantoicase (412 aa).

This sequence belongs to the allantoicase family.

In terms of biological role, the function of this enzyme is unclear as allantoicase activity is not known to exist in mammals. This chain is Probable inactive allantoicase (ALLC), found in Bos taurus (Bovine).